Here is a 193-residue protein sequence, read N- to C-terminus: UPF0301 protein SAV_5129 (193 aa).

This sequence belongs to the UPF0301 (AlgH) family.

The chain is UPF0301 protein SAV_5129 from Streptomyces avermitilis (strain ATCC 31267 / DSM 46492 / JCM 5070 / NBRC 14893 / NCIMB 12804 / NRRL 8165 / MA-4680).